The primary structure comprises 90 residues: Bombyxin D-1 (90 aa).

Residues 1-18 (MKLLGFFLSWVSVCAIVS) form the signal peptide. 3 cysteine pairs are disulfide-bonded: C27–C77, C39–C90, and C76–C81. A propeptide spans 48–68 (SVAHYAGYGWPLLPSLSEERG) (c peptide like).

Belongs to the insulin family. Heterodimer of a B chain and an A chain linked by two disulfide bonds.

It localises to the secreted. Brain peptide responsible for activation of prothoracic glands to produce ecdysone in insects. The polypeptide is Bombyxin D-1 (BBXD1) (Bombyx mori (Silk moth)).